We begin with the raw amino-acid sequence, 270 residues long: Karrikin insensitive 2 receptor CA (270 aa).

The active-site Nucleophile is the serine 95. Active-site residues include aspartate 217 and histidine 246.

It belongs to the AB hydrolase superfamily. Expressed in stigma.

The protein localises to the nucleus. It localises to the cytoplasm. In terms of biological role, hydrolase which may be involved in plant olfaction during volatile communication. The protein is Karrikin insensitive 2 receptor CA of Petunia hybrida (Petunia).